The primary structure comprises 191 residues: UPF0312 protein Sbal195_3198 (191 aa).

The N-terminal stretch at 1–22 is a signal peptide; the sequence is MKKQLFSALIGASLLAPMAASA.

It belongs to the UPF0312 family. Type 1 subfamily.

The protein localises to the periplasm. The chain is UPF0312 protein Sbal195_3198 from Shewanella baltica (strain OS195).